Reading from the N-terminus, the 788-residue chain is Bifunctional purine biosynthetic protein ADE1 (788 aa).

The segment at 1-430 (MEPIIALLIG…DIAHHALNPK (430 aa)) is GARS. An ATP-grasp domain is found at 115–321 (KDFMHRNNIP…LAEIILACVN (207 aa)). ATP is bound at residue 141–202 (LDTCTFDVVI…EELLEGEELS (62 aa)). Mg(2+) contacts are provided by Glu291 and Asn293. The AIRS stretch occupies residues 437–769 (LTYENSGVSV…TVYRIGQLVD (333 aa)).

This sequence in the N-terminal section; belongs to the GARS family. The protein in the C-terminal section; belongs to the AIR synthase family. Requires Mg(2+) as cofactor. The cofactor is Mn(2+).

It localises to the cytoplasm. Its subcellular location is the cytosol. The catalysed reaction is 5-phospho-beta-D-ribosylamine + glycine + ATP = N(1)-(5-phospho-beta-D-ribosyl)glycinamide + ADP + phosphate + H(+). It carries out the reaction 2-formamido-N(1)-(5-O-phospho-beta-D-ribosyl)acetamidine + ATP = 5-amino-1-(5-phospho-beta-D-ribosyl)imidazole + ADP + phosphate + H(+). It functions in the pathway purine metabolism; IMP biosynthesis via de novo pathway; 5-amino-1-(5-phospho-D-ribosyl)imidazole from N(2)-formyl-N(1)-(5-phospho-D-ribosyl)glycinamide: step 2/2. Its pathway is purine metabolism; IMP biosynthesis via de novo pathway; N(1)-(5-phospho-D-ribosyl)glycinamide from 5-phospho-alpha-D-ribose 1-diphosphate: step 2/2. In terms of biological role, catalyzes the second and fifth step in the 'de novo' purine biosynthesis pathway; contains phosphoribosylamine--glycine ligase (GARS) and phosphoribosylformylglycinamidine cyclo-ligase (AIRS) activities. The polypeptide is Bifunctional purine biosynthetic protein ADE1 (Schizosaccharomyces pombe (strain 972 / ATCC 24843) (Fission yeast)).